We begin with the raw amino-acid sequence, 479 residues long: Cardiolipin synthase A (479 aa).

A run of 2 helical transmembrane segments spans residues 8–28 and 38–58; these read FFGY…IHAL and IAWA…YLVF. PLD phosphodiesterase domains are found at residues 218–245 and 392–419; these read INFR…GDEY and EPGF…DNRS. Residues His223, Lys225, Asp230, His397, Lys399, and Asp404 contribute to the active site.

This sequence belongs to the phospholipase D family. Cardiolipin synthase subfamily. ClsA sub-subfamily.

The protein localises to the cell inner membrane. It carries out the reaction 2 a 1,2-diacyl-sn-glycero-3-phospho-(1'-sn-glycerol) = a cardiolipin + glycerol. Its function is as follows. Catalyzes the reversible phosphatidyl group transfer from one phosphatidylglycerol molecule to another to form cardiolipin (CL) (diphosphatidylglycerol) and glycerol. The protein is Cardiolipin synthase A of Pseudomonas syringae pv. syringae (strain B728a).